The chain runs to 1669 residues: Dystrophin, isoform B (1669 aa).

Over residues 1-11 (MTAKPPPPIPP) the composition is skewed to pro residues. Disordered stretches follow at residues 1–28 (MTAKPPPPIPPTLGGDDSGTHGPKLAPE), 43–243 (RGQQ…SEDA), 327–356 (RAQAQQQSLLNNSSSSSSNSQVEQSMRSTI), 389–417 (GGGGGNSSTGNAVANSGTSGSQQPPMPLS), and 481–508 (SGALSREELRMRRRSSHDETQLTQNSSG). Positions 53 to 62 (SQEQHATNTL) are enriched in polar residues. Residues 118-131 (GLPPTMRQPPPLPR) show a composition bias toward pro residues. Residues 132-147 (KPASTQSSAQNSAQSS) show a composition bias toward low complexity. The segment covering 153-166 (KFKDKPPPPPEKHS) has biased composition (basic and acidic residues). Low complexity-rich tracts occupy residues 328–347 (AQAQQQSLLNNSSSSSSNSQ) and 396–405 (STGNAVANSG). Basic and acidic residues predominate over residues 485–500 (SREELRMRRRSSHDET). 4 Spectrin repeats span residues 541–643 (QRFE…KQLH), 650–747 (QSFD…NRLE), 754–883 (NALL…HRLD), and 890–990 (RQFQ…KVLC). A disordered region spans residues 827 to 851 (VSDTSDTEANHDSDSRYMSAEEQSR). The tract at residues 994–1024 (AQQTHENGDDGRTTSNSGTIGPLPNLGQSVK) is disordered. Positions 1021-1054 (QSVKPPWERATTAANVPYYIDHERETTHWDHPEM) constitute a WW domain. The ZZ-type zinc finger occupies 1279-1335 (KHQAKCNICKEYPIVGFRYRCLKCFNFDMCQKCFFFGRNAKNHKLTHPMHEYCTTTT). Cys1284, Cys1287, Cys1299, Cys1302, Cys1308, Cys1311, His1321, and His1325 together coordinate Zn(2+). Ser1379 is modified (phosphoserine). 2 disordered regions span residues 1488–1516 (EQSGMPEDSNGMQHSSSSMTGLSGQGEQG) and 1559–1669 (DEPN…ELQK). Polar residues-rich tracts occupy residues 1497-1509 (NGMQHSSSSMTGL) and 1580-1611 (ALNSKPNTLQTRSVTASQLNTDSPAKMNQQNG). Residues 1630 to 1641 (QELESINDDLED) are compositionally biased toward acidic residues. A compositionally biased stretch (low complexity) spans 1642-1660 (SSSSNTTNTTTTTTTTATT).

Component of the dystrophin associated protein complex (DAPC). Interacts with Dg, via the Dg WW domain binding sites. As to expression, expressed in neuronally derived tissues, mainly the CNS and the brain of stage 16 embryos. Lower level expression is seen in the sensory organs. Expression is absent from the musculature. In larvae, expression is predominant throughout the neuropil and brain and in the eye antennal disks.

The protein resides in the cell membrane. Its subcellular location is the sarcolemma. It is found in the cytoplasm. It localises to the cytoskeleton. Its function is as follows. Required for the maintenance of appropriate synaptic retrograde communication and the stabilization of muscle cell architecture or physiology. May play a role in anchoring the cytoskeleton to the plasma membrane. This chain is Dystrophin, isoform B (Dys), found in Drosophila melanogaster (Fruit fly).